Consider the following 239-residue polypeptide: Pyridoxine 5'-phosphate synthase (239 aa).

Asn7 lines the 3-amino-2-oxopropyl phosphate pocket. 9 to 10 (DH) serves as a coordination point for 1-deoxy-D-xylulose 5-phosphate. A 3-amino-2-oxopropyl phosphate-binding site is contributed by Arg18. His43 acts as the Proton acceptor in catalysis. Residues Arg45 and His50 each contribute to the 1-deoxy-D-xylulose 5-phosphate site. Glu70 serves as the catalytic Proton acceptor. Residue Thr100 participates in 1-deoxy-D-xylulose 5-phosphate binding. Residue His191 is the Proton donor of the active site. 3-amino-2-oxopropyl phosphate is bound by residues Gly192 and 213 to 214 (GH).

This sequence belongs to the PNP synthase family. Homooctamer; tetramer of dimers.

The protein resides in the cytoplasm. It carries out the reaction 3-amino-2-oxopropyl phosphate + 1-deoxy-D-xylulose 5-phosphate = pyridoxine 5'-phosphate + phosphate + 2 H2O + H(+). The protein operates within cofactor biosynthesis; pyridoxine 5'-phosphate biosynthesis; pyridoxine 5'-phosphate from D-erythrose 4-phosphate: step 5/5. In terms of biological role, catalyzes the complicated ring closure reaction between the two acyclic compounds 1-deoxy-D-xylulose-5-phosphate (DXP) and 3-amino-2-oxopropyl phosphate (1-amino-acetone-3-phosphate or AAP) to form pyridoxine 5'-phosphate (PNP) and inorganic phosphate. The polypeptide is Pyridoxine 5'-phosphate synthase (Synechococcus sp. (strain JA-2-3B'a(2-13)) (Cyanobacteria bacterium Yellowstone B-Prime)).